The chain runs to 103 residues: Large ribosomal subunit protein bL21 (103 aa).

Belongs to the bacterial ribosomal protein bL21 family. Part of the 50S ribosomal subunit. Contacts protein L20.

In terms of biological role, this protein binds to 23S rRNA in the presence of protein L20. The sequence is that of Large ribosomal subunit protein bL21 from Pectobacterium atrosepticum (strain SCRI 1043 / ATCC BAA-672) (Erwinia carotovora subsp. atroseptica).